The chain runs to 277 residues: Alpha carbonic anhydrase 3 (277 aa).

The N-terminal stretch at 1-19 (MKTIILFVTFLALSSSSLA) is a signal peptide. The Alpha-carbonic anhydrase domain occupies 24–259 (TEFHYKPGEI…LNGRLVYLNE (236 aa)). The cysteines at positions 49 and 209 are disulfide-linked. N-linked (GlcNAc...) asparagine glycosylation is found at N70 and N107. Positions 117, 119, and 136 each coordinate Zn(2+). 205 to 206 (TT) lines the substrate pocket. A disordered region spans residues 257 to 277 (LNEQSSPSPTPRLRIPRVGPV).

The protein belongs to the alpha-class carbonic anhydrase family. Zn(2+) serves as cofactor. Post-translationally, N-glycosylated. Expressed in flowers and siliques.

Its subcellular location is the plastid. It is found in the chloroplast stroma. It catalyses the reaction hydrogencarbonate + H(+) = CO2 + H2O. Reversible hydration of carbon dioxide. This is Alpha carbonic anhydrase 3 (ACA3) from Arabidopsis thaliana (Mouse-ear cress).